Reading from the N-terminus, the 223-residue chain is Ribosome maturation factor RimM (223 aa).

The segment covering 1–12 (MARRPGSSSRGP) has biased composition (low complexity). Disordered stretches follow at residues 1-44 (MARR…DPGL) and 203-223 (VADP…DDPG). A PRC barrel domain is found at 135–210 (DEDEFFLTDL…KVVADPPDDL (76 aa)).

It belongs to the RimM family. As to quaternary structure, binds ribosomal protein uS19.

It is found in the cytoplasm. Its function is as follows. An accessory protein needed during the final step in the assembly of 30S ribosomal subunit, possibly for assembly of the head region. Essential for efficient processing of 16S rRNA. May be needed both before and after RbfA during the maturation of 16S rRNA. It has affinity for free ribosomal 30S subunits but not for 70S ribosomes. This is Ribosome maturation factor RimM from Methylorubrum extorquens (strain CM4 / NCIMB 13688) (Methylobacterium extorquens).